Here is a 135-residue protein sequence, read N- to C-terminus: Sex-regulated protein janus-A (135 aa).

Lysine 37 is a substrate binding site. The active-site Proton acceptor is the histidine 63. 104–106 contacts substrate; sequence SQG.

Belongs to the janus family.

Functionally, janA and janB regulate somatic sex differentiation. The protein is Sex-regulated protein janus-A (janA) of Drosophila orena (Fruit fly).